Reading from the N-terminus, the 179-residue chain is Phospholipase A2 (179 aa).

An N-terminal signal peptide occupies residues 1–21; the sequence is MHALRSSVLALWLCLHVSVRA. Residues 22–39 constitute a propeptide that is removed on maturation; that stretch reads WMTYRSANGLDEYEPEDR. 3 residues coordinate Ca(2+): tryptophan 47, glycine 49, and glycine 51. Intrachain disulfides connect cysteine 48–cysteine 70, cysteine 69–cysteine 109, cysteine 76–cysteine 102, cysteine 100–cysteine 133, and cysteine 142–cysteine 150. Histidine 73 is a catalytic residue. Aspartate 74 is a binding site for Ca(2+). Aspartate 103 is a catalytic residue. Asparagine 112 is a glycosylation site (N-linked (GlcNAc...) asparagine).

Ca(2+) is required as a cofactor. As to expression, expressed by the venom gland.

The protein localises to the secreted. The enzyme catalyses a 1,2-diacyl-sn-glycero-3-phosphocholine + H2O = a 1-acyl-sn-glycero-3-phosphocholine + a fatty acid + H(+). In terms of biological role, PLA2 catalyzes the calcium-dependent hydrolysis of the 2-acyl groups in 3-sn-phosphoglycerides. The sequence is that of Phospholipase A2 from Xylocopa appendiculata circumvolans (Japanese carpenter bee).